Here is a 372-residue protein sequence, read N- to C-terminus: Chaperone protein DnaJ (372 aa).

The J domain maps to 5–69 (DYYEVLGLTK…QKKARYDQFG (65 aa)). A CR-type zinc finger spans residues 129–211 (GKETEIEIPK…CRGEGKVQKR (83 aa)). Zn(2+)-binding residues include Cys-142, Cys-145, Cys-159, Cys-162, Cys-185, Cys-188, Cys-199, and Cys-202. CXXCXGXG motif repeat units lie at residues 142–149 (CETCHGSG), 159–166 (CSTCNGAG), 185–192 (CTTCHGTG), and 199–206 (CSTCRGEG).

The protein belongs to the DnaJ family. In terms of assembly, homodimer. Zn(2+) serves as cofactor.

The protein resides in the cytoplasm. Its function is as follows. Participates actively in the response to hyperosmotic and heat shock by preventing the aggregation of stress-denatured proteins and by disaggregating proteins, also in an autonomous, DnaK-independent fashion. Unfolded proteins bind initially to DnaJ; upon interaction with the DnaJ-bound protein, DnaK hydrolyzes its bound ATP, resulting in the formation of a stable complex. GrpE releases ADP from DnaK; ATP binding to DnaK triggers the release of the substrate protein, thus completing the reaction cycle. Several rounds of ATP-dependent interactions between DnaJ, DnaK and GrpE are required for fully efficient folding. Also involved, together with DnaK and GrpE, in the DNA replication of plasmids through activation of initiation proteins. This Lysinibacillus sphaericus (strain C3-41) protein is Chaperone protein DnaJ.